A 956-amino-acid chain; its full sequence is MLPLSTPLLAQLQRVTEHFHQLTLNVEPVAAHEQAILSLSDFVVENLQAHPEWLVEIRQHPPEAQEWHQYTEWLQQLLASVEDENTLMRVLRQFRNKILVRIAWSQALHSITTQETLQQLSMLAETLIIAARDWLYQRCCQDWGTPCNERGEPQPLLIIGMGKLGGGELNFSSDIDLIFVYPENGITQGGRREMDNTQFFTRLGQHLIKVLDQQTVDGFVYRVDMRLRPFGDSGPLVFSFVALEDYYQEQGRDWERYAMVKARIMGSDNQAYGEELRRMLRPFIFRRYIDFSVIQSLRNMKGMIEREVRHRGLKDNIKLGAGGIREIEFIAQVFQLIRGGRELCLQSQALLPTLQIIAKLTLLQSLQVKQLADGYLFLRRLENLLQSINDQQTQTLPEDELNRSRLTWGMGFESWDALIIELNNKMSAVRAIFTQLIGDDSDNSDEEPSHVPFKSLWLEDLEKEELIILAPHLDEEIAQQILHIISVFRHDVGKRTIGPRGRDVLDHLMPRLLAKVCLRQDANNQDVNNRNVNIVLERVIPLLLSIVSRTTYLELILESEAVLAHVIRLCAASPMIATQLACHPLLLDELLDPQFLYEPLPLNAYKDELRQYLLRIPEDDEEQQLEALRQFKQAQLLRIAAEDITGVLPVMKVSDHLTYLAEAIIEAVVLQAWGQMAKRYGVPSHLSQRQGLGFAVIGYGKLGGWELGYGSDLDLVFLLDCPMDVMTDGDRSIDARQFYLRLAQRIMHLFSARTSSGVLYDVDVRLRPSGESGMLVSTIGAFADYQRNQAWTWEHQALVRARMVFGDENLHRDFERIRHQTLCTRREPALLRQQVREMREKMHKHLGSHHSDQFDIKADPGGITDIEFIAQYLVLRYAAENERLVRWSDNVRIFQLMAAYEIMDEDEAAGLTQAYVSMRDELHHLTLQTHSSRVSIHCFSEQQERVRRSWQQWLGE.

Residues 1-441 (MLPLSTPLLA…IFTQLIGDDS (441 aa)) form an adenylyl removase region. The interval 450-956 (HVPFKSLWLE…RRSWQQWLGE (507 aa)) is adenylyl transferase.

Belongs to the GlnE family. Mg(2+) is required as a cofactor.

It carries out the reaction [glutamine synthetase]-O(4)-(5'-adenylyl)-L-tyrosine + phosphate = [glutamine synthetase]-L-tyrosine + ADP. The catalysed reaction is [glutamine synthetase]-L-tyrosine + ATP = [glutamine synthetase]-O(4)-(5'-adenylyl)-L-tyrosine + diphosphate. Involved in the regulation of glutamine synthetase GlnA, a key enzyme in the process to assimilate ammonia. When cellular nitrogen levels are high, the C-terminal adenylyl transferase (AT) inactivates GlnA by covalent transfer of an adenylyl group from ATP to specific tyrosine residue of GlnA, thus reducing its activity. Conversely, when nitrogen levels are low, the N-terminal adenylyl removase (AR) activates GlnA by removing the adenylyl group by phosphorolysis, increasing its activity. The regulatory region of GlnE binds the signal transduction protein PII (GlnB) which indicates the nitrogen status of the cell. The polypeptide is Bifunctional glutamine synthetase adenylyltransferase/adenylyl-removing enzyme (Photorhabdus laumondii subsp. laumondii (strain DSM 15139 / CIP 105565 / TT01) (Photorhabdus luminescens subsp. laumondii)).